A 67-amino-acid chain; its full sequence is Neurotoxin Os3 (67 aa).

The LCN-type CS-alpha/beta domain maps to 3-67; the sequence is RDGYIAQPHN…GVIVDGEKCH (65 aa). 4 disulfide bridges follow: Cys13-Cys66, Cys17-Cys39, Cys24-Cys48, and Cys28-Cys50.

The protein belongs to the long (4 C-C) scorpion toxin superfamily. Sodium channel inhibitor family. Alpha subfamily. Expressed by the venom gland.

It is found in the secreted. Its function is as follows. Binds to sodium channels (Nav) and inhibits the inactivation of the activated channels, thereby blocking neuronal transmission. The chain is Neurotoxin Os3 from Orthochirus scrobiculosus (Central Asian scorpion).